Here is a 173-residue protein sequence, read N- to C-terminus: Bacterial deubiquitinase-like protein BilC (173 aa).

Zn(2+)-binding residues include H103, H105, and D115.

Belongs to the M67B family. Zn(2+) is required as a cofactor.

Component of the Bil (bacterial ISG15-like) antiviral defense system, composed of BilA, BilB, BilC and BilD. The Bil system specifically conjugates a ubiquitin-like moiety (bilA) to the bacteriophage central tail fiber (CTF, or tip attachment protein J) via reactions involving E1 (bilD) and E2 (bilB). Modifies CTF of phage SECphi27 and SECphi4, which probably interferes with assembly of the phage tail. Also modifies T5 baseplate hub protein pb3 (gene D16), but not gp27 of phage T6 (Bil defends against T6). BilC is a probable metalloprotease that may cleave non-specifically conjugated targets. Bil-encoding bacteria produce mostly defective phage SECphi27, many of which have phage assembly defects, including no tails. SECphi27 phage progeny produced in E.coli with the Bil system inject less DNA into naive host cells, maybe because the phage are less able to adsorb and inject their DNA into host cells. Functionally, expression of the Bil system in E.coli (strain MG1655) confers about 100-fold resistance to phage SECphi27, SECphi18, SECphi6, SECphi4 and T5, but not to SECphi17. When cells expressing the Bil system are infected by phage SECphi27 at low multiplicity of infection (0.03 MOI) the culture survives, at 3.0 MOI the culture collapses at the same time as cells without the Bil system. Its function is as follows. Cleaves a ubiquitin-GFP (Ubl-GFP) fusion protein in vivo. This is Bacterial deubiquitinase-like protein BilC from Collimonas sp. (strain OK412).